Here is a 148-residue protein sequence, read N- to C-terminus: UPF0208 membrane protein HD_1715 (148 aa).

2 consecutive transmembrane segments (helical) span residues 41–60 (AARF…YFFT) and 66–88 (ILAN…LYWL).

It belongs to the UPF0208 family.

The protein resides in the cell inner membrane. The polypeptide is UPF0208 membrane protein HD_1715 (Haemophilus ducreyi (strain 35000HP / ATCC 700724)).